Here is a 178-residue protein sequence, read N- to C-terminus: Twist-related protein (178 aa).

The bHLH domain occupies 20–71; it reads QQRACANRRERQRTKELNDAFTLLRKLIPSMPSDKMSKIHTLRIATDYISFL.

As to quaternary structure, efficient DNA binding requires dimerization with another bHLH protein. Homodimer. Forms a heterodimer with hlh-2. Expressed in defecation-associated muscles and neuron-like cells in the head at the L1 stage. In later larvae, expressed in SM cells and their descendants. Not expressed in differentiated body wall or sex muscles.

It localises to the nucleus. Functionally, acts as a transcriptional regulator. Involved in postembryonic mesodermal cell fate specification. Activates ceh-24 and egl-15 during mesodermal patterning. This is Twist-related protein (hlh-8) from Caenorhabditis elegans.